A 187-amino-acid chain; its full sequence is UPF0301 protein WIGBR1650 (187 aa).

The protein belongs to the UPF0301 (AlgH) family.

The sequence is that of UPF0301 protein WIGBR1650 from Wigglesworthia glossinidia brevipalpis.